The chain runs to 955 residues: 2-oxoglutarate dehydrogenase E1 component (955 aa).

It belongs to the alpha-ketoglutarate dehydrogenase family. In terms of assembly, homodimer. Part of the 2-oxoglutarate dehydrogenase (OGDH) complex composed of E1 (2-oxoglutarate dehydrogenase), E2 (dihydrolipoamide succinyltransferase) and E3 (dihydrolipoamide dehydrogenase); the complex contains multiple copies of the three enzymatic components (E1, E2 and E3). It depends on thiamine diphosphate as a cofactor.

The catalysed reaction is N(6)-[(R)-lipoyl]-L-lysyl-[protein] + 2-oxoglutarate + H(+) = N(6)-[(R)-S(8)-succinyldihydrolipoyl]-L-lysyl-[protein] + CO2. E1 component of the 2-oxoglutarate dehydrogenase (OGDH) complex which catalyzes the decarboxylation of 2-oxoglutarate, the first step in the conversion of 2-oxoglutarate to succinyl-CoA and CO(2). The chain is 2-oxoglutarate dehydrogenase E1 component from Bacillus cereus (strain AH820).